A 95-amino-acid chain; its full sequence is Large ribosomal subunit protein uL23 (95 aa).

This sequence belongs to the universal ribosomal protein uL23 family. As to quaternary structure, part of the 50S ribosomal subunit. Contacts protein L29, and trigger factor when it is bound to the ribosome.

In terms of biological role, one of the early assembly proteins it binds 23S rRNA. One of the proteins that surrounds the polypeptide exit tunnel on the outside of the ribosome. Forms the main docking site for trigger factor binding to the ribosome. The polypeptide is Large ribosomal subunit protein uL23 (Fusobacterium nucleatum subsp. nucleatum (strain ATCC 25586 / DSM 15643 / BCRC 10681 / CIP 101130 / JCM 8532 / KCTC 2640 / LMG 13131 / VPI 4355)).